The chain runs to 809 residues: Lon protease (809 aa).

Residues 8–203 (LPVVALRNMA…RLCLILADEI (196 aa)) form the Lon N-terminal domain. Residue 354 to 361 (GPPGTGKT) coordinates ATP. Positions 629 to 809 (KDEVGIVCGL…MDEVLKHALV (181 aa)) constitute a Lon proteolytic domain. Active-site residues include Ser-716 and Lys-759.

It belongs to the peptidase S16 family. In terms of assembly, homohexamer. Organized in a ring with a central cavity.

Its subcellular location is the cytoplasm. It carries out the reaction Hydrolysis of proteins in presence of ATP.. Its function is as follows. ATP-dependent serine protease that mediates the selective degradation of mutant and abnormal proteins as well as certain short-lived regulatory proteins. Required for cellular homeostasis and for survival from DNA damage and developmental changes induced by stress. Degrades polypeptides processively to yield small peptide fragments that are 5 to 10 amino acids long. Binds to DNA in a double-stranded, site-specific manner. The chain is Lon protease from Lachnoclostridium phytofermentans (strain ATCC 700394 / DSM 18823 / ISDg) (Clostridium phytofermentans).